A 302-amino-acid polypeptide reads, in one-letter code: Probable alpha-L-glutamate ligase (302 aa).

Residues 105-288 (LQLLARKGIP…LAGKIIEYIE (184 aa)) enclose the ATP-grasp domain. Residues K142, 179–180 (EF), D188, and 212–214 (RAN) contribute to the ATP site. Mg(2+)-binding residues include D249, E261, and N263. Residues D249, E261, and N263 each coordinate Mn(2+).

It belongs to the RimK family. It depends on Mg(2+) as a cofactor. The cofactor is Mn(2+).

The polypeptide is Probable alpha-L-glutamate ligase (Legionella pneumophila (strain Paris)).